We begin with the raw amino-acid sequence, 172 residues long: Protein/nucleic acid deglycase 2 (172 aa).

One can recognise a PfpI endopeptidase domain in the interval 3–171; sequence KKIAVLITDE…FNREALRLLG (169 aa). The Nucleophile role is filled by C104.

The protein belongs to the peptidase C56 family. Exists in monomeric, trimeric, and hexameric forms.

The protein resides in the cytoplasm. It catalyses the reaction N(omega)-(1-hydroxy-2-oxopropyl)-L-arginyl-[protein] + H2O = lactate + L-arginyl-[protein] + H(+). The enzyme catalyses N(6)-(1-hydroxy-2-oxopropyl)-L-lysyl-[protein] + H2O = lactate + L-lysyl-[protein] + H(+). The catalysed reaction is S-(1-hydroxy-2-oxopropyl)-L-cysteinyl-[protein] + H2O = lactate + L-cysteinyl-[protein] + H(+). It carries out the reaction N(omega)-(1-hydroxy-2-oxoethyl)-L-arginyl-[protein] + H2O = L-arginyl-[protein] + glycolate + H(+). It catalyses the reaction N(6)-(1-hydroxy-2-oxoethyl)-L-lysyl-[protein] + H2O = glycolate + L-lysyl-[protein] + H(+). The enzyme catalyses S-(1-hydroxy-2-oxoethyl)-L-cysteinyl-[protein] + H2O = glycolate + L-cysteinyl-[protein] + H(+). The catalysed reaction is N(2)-(1-hydroxy-2-oxopropyl)-dGTP + H2O = lactate + dGTP + H(+). It carries out the reaction N(2)-(1-hydroxy-2-oxopropyl)-GTP + H2O = lactate + GTP + H(+). It catalyses the reaction N(2)-(1-hydroxy-2-oxopropyl)-GDP + H2O = lactate + GDP + H(+). The enzyme catalyses N(2)-(1-hydroxy-2-oxopropyl)-GMP + H2O = lactate + GMP + H(+). The catalysed reaction is N(2)-(1-hydroxy-2-oxoethyl)-dGTP + H2O = dGTP + glycolate + H(+). It carries out the reaction N(2)-(1-hydroxy-2-oxoethyl)-GTP + H2O = glycolate + GTP + H(+). It catalyses the reaction N(2)-(1-hydroxy-2-oxoethyl)-GDP + H2O = glycolate + GDP + H(+). The enzyme catalyses N(2)-(1-hydroxy-2-oxoethyl)-GMP + H2O = glycolate + GMP + H(+). The catalysed reaction is an N(2)-(1-hydroxy-2-oxopropyl)-guanosine in RNA + H2O = a guanosine in RNA + lactate + H(+). It carries out the reaction an N(2)-(1-hydroxy-2-oxopropyl)-2'-deoxyguanosine in DNA + H2O = a 2'-deoxyguanosine in DNA + lactate + H(+). It catalyses the reaction an N(2)-(1-hydroxy-2-oxoethyl)-guanosine in RNA + H2O = a guanosine in RNA + glycolate + H(+). The enzyme catalyses an N(2)-(1-hydroxy-2-oxoethyl)-2'-deoxyguanosine in DNA + H2O = a 2'-deoxyguanosine in DNA + glycolate + H(+). Its activity is regulated as follows. Glyoxalase activity is inhibited by zinc ions at pH 7.0. In terms of biological role, protein and nucleotide deglycase that catalyzes the deglycation of the Maillard adducts formed between amino groups of proteins or nucleotides and reactive carbonyl groups of glyoxals. Thus, functions as a protein deglycase that repairs methylglyoxal- and glyoxal-glycated proteins, and releases repaired proteins and lactate or glycolate, respectively. Deglycates cysteine, arginine and lysine residues in proteins, and thus reactivates these proteins by reversing glycation by glyoxals. Is able to repair glycated serum albumin, collagen, glyceraldehyde-3-phosphate dehydrogenase, and fructose biphosphate aldolase. Acts on early glycation intermediates (hemithioacetals and aminocarbinols), preventing the formation of advanced glycation endproducts (AGE) that cause irreversible damage. Also functions as a nucleotide deglycase able to repair glycated guanine in the free nucleotide pool (GTP, GDP, GMP, dGTP) and in DNA and RNA. Is thus involved in a major nucleotide repair system named guanine glycation repair (GG repair), dedicated to reversing methylglyoxal and glyoxal damage via nucleotide sanitization and direct nucleic acid repair. In vitro, prevents acrylamide formation in asparagine/glyoxal and asparagine/sugar mixtures at 55 degrees Celsius, likely by degrading asparagine/glyoxal Maillard adducts formed at high temperatures. Also displays an apparent glyoxalase activity that in fact reflects its deglycase activity. Is a general stress protein; is required for the protection of bacterial cells against many environmental stresses, including oxidative, thermal, osmotic, UV, and pH stresses. And plays an important role in protection against electrophile/carbonyl stress. This chain is Protein/nucleic acid deglycase 2 (yhbO), found in Escherichia coli (strain K12).